A 282-amino-acid polypeptide reads, in one-letter code: Undecaprenyl-diphosphatase (282 aa).

7 helical membrane-spanning segments follow: residues L6–V26, S45–F65, L85–I105, F112–V132, A200–M220, H230–V250, and Y262–F282.

It belongs to the UppP family.

The protein resides in the cell inner membrane. It carries out the reaction di-trans,octa-cis-undecaprenyl diphosphate + H2O = di-trans,octa-cis-undecaprenyl phosphate + phosphate + H(+). Functionally, catalyzes the dephosphorylation of undecaprenyl diphosphate (UPP). Confers resistance to bacitracin. In Bordetella avium (strain 197N), this protein is Undecaprenyl-diphosphatase.